The following is a 264-amino-acid chain: ATP synthase subunit a (264 aa).

6 helical membrane-spanning segments follow: residues 29 to 49, 87 to 107, 134 to 154, 177 to 197, 208 to 228, and 235 to 255; these read TWHI…LWIF, NALI…MNFM, DLNI…YYSI, IPVN…SLAL, LIFI…SLGV, and LIFH…LTIV.

Belongs to the ATPase A chain family. As to quaternary structure, F-type ATPases have 2 components, CF(1) - the catalytic core - and CF(0) - the membrane proton channel. CF(1) has five subunits: alpha(3), beta(3), gamma(1), delta(1), epsilon(1). CF(0) has three main subunits: a(1), b(2) and c(9-12). The alpha and beta chains form an alternating ring which encloses part of the gamma chain. CF(1) is attached to CF(0) by a central stalk formed by the gamma and epsilon chains, while a peripheral stalk is formed by the delta and b chains.

The protein localises to the cell inner membrane. Its function is as follows. Key component of the proton channel; it plays a direct role in the translocation of protons across the membrane. In Shewanella amazonensis (strain ATCC BAA-1098 / SB2B), this protein is ATP synthase subunit a.